The sequence spans 219 residues: LexA repressor (219 aa).

Positions 28–48 (RAEIAAELGFRSANAAEEHLQ) form a DNA-binding region, H-T-H motif. Active-site for autocatalytic cleavage activity residues include serine 138 and lysine 175.

Belongs to the peptidase S24 family. In terms of assembly, homodimer.

The enzyme catalyses Hydrolysis of Ala-|-Gly bond in repressor LexA.. In terms of biological role, represses a number of genes involved in the response to DNA damage (SOS response), including recA and lexA. In the presence of single-stranded DNA, RecA interacts with LexA causing an autocatalytic cleavage which disrupts the DNA-binding part of LexA, leading to derepression of the SOS regulon and eventually DNA repair. This is LexA repressor from Herminiimonas arsenicoxydans.